Reading from the N-terminus, the 223-residue chain is DNA mismatch repair protein MutH (223 aa).

The protein belongs to the MutH family.

The protein resides in the cytoplasm. Sequence-specific endonuclease that cleaves unmethylated GATC sequences. It is involved in DNA mismatch repair. The chain is DNA mismatch repair protein MutH from Shewanella sp. (strain W3-18-1).